The following is a 201-amino-acid chain: Regulator of G-protein signaling rgs-1 (201 aa).

The 120-residue stretch at 37 to 156 (SWQQSFDTLM…FLTSIFYRET (120 aa)) folds into the RGS domain. A disordered region spans residues 168–201 (GGDEEKEREQRAERARLNVPATAAEGSSKDISMV). The segment covering 170-183 (DEEKEREQRAERAR) has biased composition (basic and acidic residues).

Expressed in most or all neurons.

Functionally, inhibits G protein signaling in nervous system, interacting preferentially with the G(O) subfamily member goa-1. In vitro, protein acts as a GTPase activator of goa-1. Rgs-1 and rgs-2 redundantly adjust signaling when worms are fed to allow rapid induction of egg-laying behavior. The protein is Regulator of G-protein signaling rgs-1 (rgs-1) of Caenorhabditis elegans.